Consider the following 523-residue polypeptide: Bifunctional purine biosynthesis protein PurH (523 aa).

Residues 4–152 (DHIRRPIRRA…KNHPSVAVVT (149 aa)) form the MGS-like domain.

The protein belongs to the PurH family.

The enzyme catalyses (6R)-10-formyltetrahydrofolate + 5-amino-1-(5-phospho-beta-D-ribosyl)imidazole-4-carboxamide = 5-formamido-1-(5-phospho-D-ribosyl)imidazole-4-carboxamide + (6S)-5,6,7,8-tetrahydrofolate. It catalyses the reaction IMP + H2O = 5-formamido-1-(5-phospho-D-ribosyl)imidazole-4-carboxamide. The protein operates within purine metabolism; IMP biosynthesis via de novo pathway; 5-formamido-1-(5-phospho-D-ribosyl)imidazole-4-carboxamide from 5-amino-1-(5-phospho-D-ribosyl)imidazole-4-carboxamide (10-formyl THF route): step 1/1. It participates in purine metabolism; IMP biosynthesis via de novo pathway; IMP from 5-formamido-1-(5-phospho-D-ribosyl)imidazole-4-carboxamide: step 1/1. This is Bifunctional purine biosynthesis protein PurH from Mycobacterium marinum (strain ATCC BAA-535 / M).